Here is a 265-residue protein sequence, read N- to C-terminus: Mlc titration factor A (265 aa).

Positions 111, 148, 152, and 211 each coordinate Zn(2+).

It belongs to the MtfA family. Interacts with Mlc with high affinity. Zn(2+) serves as cofactor.

It localises to the cytoplasm. With respect to regulation, proteolytic activity is stimulated by interaction with Mlc. Addition of the chelators EDTA or phenanthroline significantly reduces the peptidase activity, whereas the addition of other protease inhibitors has much less effect. In terms of biological role, involved in the modulation of the activity of the glucose-phosphotransferase system (glucose-PTS). Interacts with the transcriptional repressor Mlc, preventing its interaction with DNA and leading to the modulation of expression of genes regulated by Mlc, including ptsG, which encodes the PTS system glucose-specific EIICB component. Shows zinc-dependent metallopeptidase activity. In vitro, can cleave several artificial substrates. The greatest activity and specificity is observed for L-alanine fused to 4-nitroanilide (L-alanine-pNA). Shows significantly lower activity towards L-arginine-pNA, L-proline-pNA, hippuryl-L-phenylalanine and hippuryl-L-arginine, and cannot use FTC-casein. Mlc does not appear to be a biologically relevant peptidase substrate. Biologically relevant targets may have a function in growth transition under changing environmental conditions. In Escherichia coli (strain K12), this protein is Mlc titration factor A.